The sequence spans 674 residues: Tripartite terminase subunit 3 (674 aa).

The Walker A motif motif lies at 212–219 (VPRRHGKT). Positions 305-310 (LLLVDE) match the Walker B motif motif. Glu-310 (for ATPase activity) is an active-site residue. Residues Asp-463, Glu-534, and Asp-651 each act as for nuclease activity in the active site.

This sequence belongs to the herpesviridae TRM3 protein family. In terms of assembly, interacts with the terminase subunits TRM1 and TRM2. Interacts with portal protein.

It localises to the host nucleus. In terms of biological role, component of the molecular motor that translocates viral genomic DNA in empty capsid during DNA packaging. Forms a tripartite terminase complex together with TRM1 and TRM2 in the host cytoplasm. Once the complex reaches the host nucleus, it interacts with the capsid portal vertex. This portal forms a ring in which genomic DNA is translocated into the capsid. TRM3 carries an RNase H-like nuclease activity that plays an important role for the cleavage of concatemeric viral DNA into unit length genomes. This is Tripartite terminase subunit 3 from Homo sapiens (Human).